Consider the following 299-residue polypeptide: Sugar transporter SWEET1 (299 aa).

In terms of domain architecture, MtN3/slv 1 spans 7-91; the sequence is QVLSISAITT…CVFFLIYSLP (85 aa). Transmembrane regions (helical) follow at residues 8–28, 36–56, 67–87, 95–115, 124–144, 155–175, and 180–200; these read VLSI…IPIC, AVGD…SFWL, MIIV…FFLI, FTCQ…WIAL, VICM…LGVV, LPMC…GNLV, and IIIP…LFVV. The MtN3/slv 2 domain occupies 121–205; it reads YLGVICMTFN…ALFVVLPIRE (85 aa). Residues 230–299 form a disordered region; that stretch reads RGDCIVSSPP…DPDLSSIQSP (70 aa). The span at 247–261 shows a compositional bias: basic and acidic residues; that stretch reads NETRSDVEDKFDKLM. The segment covering 276–299 has biased composition (low complexity); the sequence is SMGSPPSYKSRSSSDPDLSSIQSP.

This sequence belongs to the SWEET sugar transporter family.

It localises to the golgi apparatus membrane. Its subcellular location is the cell membrane. Its function is as follows. Mediates both low-affinity uptake and efflux of sugar across the membrane. This is Sugar transporter SWEET1 (swt-1) from Caenorhabditis elegans.